A 396-amino-acid polypeptide reads, in one-letter code: tRNA (guanine(9)-N1)-methyltransferase (396 aa).

2 stretches are compositionally biased toward basic and acidic residues: residues 1-18 (MEDD…HDEV) and 52-73 (DRID…HGKD). The tract at residues 1 to 109 (MEDDDRPRKY…KVKRKEKLVA (109 aa)) is disordered. The SAM-dependent MTase TRM10-type domain maps to 139–357 (TQKKFQRSTL…QVIPQRKGGK (219 aa)). S-adenosyl-L-methionine contacts are provided by residues 264–265 (LS), Gly284, 288–292 (DKNRH), Cys296, Leu310, and 322–324 (QVL). Asp288 serves as the catalytic Proton acceptor. A disordered region spans residues 354–396 (KGGKLKSADHESEDQTPRESVEAVEAEPDGEGAAAEAGEGGKE). The span at 359 to 374 (KSADHESEDQTPRESV) shows a compositional bias: basic and acidic residues.

It belongs to the class IV-like SAM-binding methyltransferase superfamily. TRM10 family. Monomer.

It is found in the cytoplasm. Its subcellular location is the nucleus. The enzyme catalyses guanosine(9) in tRNA + S-adenosyl-L-methionine = N(1)-methylguanosine(9) in tRNA + S-adenosyl-L-homocysteine + H(+). Its function is as follows. S-adenosyl-L-methionine-dependent guanine N(1)-methyltransferase that catalyzes the formation of N(1)-methylguanine at position 9 (m1G9) in cytoplasmic tRNA. The chain is tRNA (guanine(9)-N1)-methyltransferase from Aspergillus fumigatus (strain ATCC MYA-4609 / CBS 101355 / FGSC A1100 / Af293) (Neosartorya fumigata).